A 232-amino-acid polypeptide reads, in one-letter code: Pirin-like protein CC_1473 (232 aa).

It belongs to the pirin family.

This Caulobacter vibrioides (strain ATCC 19089 / CIP 103742 / CB 15) (Caulobacter crescentus) protein is Pirin-like protein CC_1473.